Consider the following 410-residue polypeptide: Dipeptidase ataJ (410 aa).

The Zn(2+) site is built by His-27, Asp-29, and Glu-138. Residue His-165 coordinates substrate. The tract at residues 180 to 200 (TSSPWSEYGGQTHDPGDEPSR) is disordered. Residues Arg-258 and Asp-318 each coordinate substrate.

The protein belongs to the metallo-dependent hydrolases superfamily. Peptidase M19 family. Zn(2+) serves as cofactor.

It catalyses the reaction an L-aminoacyl-L-amino acid + H2O = 2 an L-alpha-amino acid. It functions in the pathway mycotoxin biosynthesis. In terms of biological role, dipeptidase; part of the gene cluster that mediates the biosynthesis of acetylaranotin, a member of the epipolythiodioxopiperazine (ETP) class of toxins characterized by a disulfide-bridged cyclic dipeptide. The first step of acetylaranotin biosynthesis is performed by the NRPS ataP which produces diketopiperazine cyclo-L-Phe-L-Phe via the condensation of 2 phenylalanines (L-Phe). The ataC domain of ataTC then catalyzes the formation of bishydroxylation of cyclo-L-Phe-L-Phe. The glutathione S-transferase domain ataG in ataIMG further catalyzes the conjugation of two glutathiones to the bishydroxylated intermediate. Next, the dipeptidase ataJ removes the Glu residues. The following step is performed by the carbon sulfur lyase domain ataI of ataIMG which may convert the bis-cysteinyl adduct to yield an epidithiol intermediate. The ataT domain from ataTC then catalyzes the oxidation of the free dithiols, followed by a cyclization step catalyzed by the cytochrome P450 ataF. AtaF probably acts as an epoxidase to promote a dual epoxidation formation at C8 and C9 along with C8' and C9', followed by the spontaneous nucleophilic attack of the amide nitrogens N10 and N10' to yield an intermediate with the pyrrolidine partial structure. The final steps of acetylaranotin biosynthesis involve the acetylation and ring rearrangement of an epitetrathiodiketopiperazine intermediate to produce acetylaranotin. AtaH probably catalyzes the acetylation of epitetrathiodiketopiperazine to produce a diacetate and ataY is responsible for the formation of the dihydrooxepin moiety that converts the diacetate intermediate to acetylaranotin via acetylapoaranotin. Both enzymes could function independently in the absence of the other. The acetylaranotin bis-thiomethyltransferase ataS located outside of acetylaranotin gene cluster is the main thiomethyltransferase responsible for converting acetylaranotin and its related intermediates to their methylated forms. This Aspergillus terreus (strain NIH 2624 / FGSC A1156) protein is Dipeptidase ataJ.